The primary structure comprises 707 residues: Protein kinase C theta type (707 aa).

Residues 1-107 (MSPFLRIGLS…KNNGRTEIWL (107 aa)) form the C2 domain. Y90 is subject to Phosphotyrosine; by LCK. Residues 159 to 209 (CHEFTATFFPQPTFCSVCHEFVWGLNKQGYQCRQCNAAIHKKCIDKVIAKC) form a Phorbol-ester/DAG-type 1 zinc finger. Phosphothreonine; by autocatalysis is present on T219. The segment at 231–281 (PHRFKVYNYKSPTFCEHCGTLLWGLARQGLKCDACGMNVHHRCQTKVANLC) adopts a Phorbol-ester/DAG-type 2 zinc-finger fold. The tract at residues 327-365 (ETRPPCVPTPGKREPQGISWDSPLDGSNKSAGPPEPEVS) is disordered. Position 348 is a phosphoserine (S348). In terms of domain architecture, Protein kinase spans 380–634 (FILHKMLGKG…RGDIRQHPLF (255 aa)). ATP-binding positions include 386–394 (LGKGSFGKV) and K409. D504 serves as the catalytic Proton acceptor. Position 538 is a phosphothreonine; by PDPK1 (T538). Positions 635–706 (REINWEELER…INPGMETLIC (72 aa)) constitute an AGC-kinase C-terminal domain. S676 carries the phosphoserine; by autocatalysis modification. Residue S685 is modified to Phosphoserine. The residue at position 695 (S695) is a Phosphoserine; by autocatalysis.

This sequence belongs to the protein kinase superfamily. AGC Ser/Thr protein kinase family. PKC subfamily. In terms of assembly, part of a membrane raft complex composed at least of BCL10, CARD11, MALT1 and IKBKB. Interacts with GLRX3 (via N-terminus). Interacts with ECT2. Interacts with CCDC88A/GIV; the interaction leads to phosphorylation of CCDC88A and inhibition of its guanine nucleotide exchange factor activity. Interacts with CD28. It depends on Mg(2+) as a cofactor. In terms of processing, autophosphorylation at Thr-219 is required for targeting to the TCR and cellular function of PRKCQ upon antigen receptor ligation. Following TCR stimulation, phosphorylated at Tyr-90 and Ser-685. In terms of tissue distribution, T-lymphocytes and skeletal muscle.

The protein localises to the cytoplasm. It localises to the cell membrane. The enzyme catalyses L-seryl-[protein] + ATP = O-phospho-L-seryl-[protein] + ADP + H(+). It catalyses the reaction L-threonyl-[protein] + ATP = O-phospho-L-threonyl-[protein] + ADP + H(+). Novel PKCs (PRKCD, PRKCE, PRKCH and PRKCQ) are calcium-insensitive, but activated by diacylglycerol (DAG) and phosphatidylserine. Three specific sites; Thr-538 (activation loop of the kinase domain), Ser-676 (turn motif) and Ser-695 (hydrophobic region), need to be phosphorylated for its full activation. In terms of biological role, calcium-independent, phospholipid- and diacylglycerol (DAG)-dependent serine/threonine-protein kinase that mediates non-redundant functions in T-cell receptor (TCR) signaling, including T-cells activation, proliferation, differentiation and survival, by mediating activation of multiple transcription factors such as NF-kappa-B, JUN, NFATC1 and NFATC2. In TCR-CD3/CD28-co-stimulated T-cells, is required for the activation of NF-kappa-B and JUN, which in turn are essential for IL2 production, and participates in the calcium-dependent NFATC1 and NFATC2 transactivation. Mediates the activation of the canonical NF-kappa-B pathway (NFKB1) by direct phosphorylation of CARD11 on several serine residues, inducing CARD11 association with lipid rafts and recruitment of the BCL10-MALT1 complex, which then activates IKK complex, resulting in nuclear translocation and activation of NFKB1. May also play an indirect role in activation of the non-canonical NF-kappa-B (NFKB2) pathway. In the signaling pathway leading to JUN activation, acts by phosphorylating the mediator STK39/SPAK and may not act through MAP kinases signaling. Plays a critical role in TCR/CD28-induced NFATC1 and NFATC2 transactivation by participating in the regulation of reduced inositol 1,4,5-trisphosphate generation and intracellular calcium mobilization. After costimulation of T-cells through CD28 can phosphorylate CBLB and is required for the ubiquitination and subsequent degradation of CBLB, which is a prerequisite for the activation of TCR. During T-cells differentiation, plays an important role in the development of T-helper 2 (Th2) cells following immune and inflammatory responses, and, in the development of inflammatory autoimmune diseases, is necessary for the activation of IL17-producing Th17 cells. May play a minor role in Th1 response. Upon TCR stimulation, mediates T-cell protective survival signal by phosphorylating BAD, thus protecting T-cells from BAD-induced apoptosis, and by up-regulating BCL-X(L)/BCL2L1 levels through NF-kappa-B and JUN pathways. In platelets, regulates signal transduction downstream of the ITGA2B, CD36/GP4, F2R/PAR1 and F2RL3/PAR4 receptors, playing a positive role in 'outside-in' signaling and granule secretion signal transduction. May relay signals from the activated ITGA2B receptor by regulating the uncoupling of WASP and WIPF1, thereby permitting the regulation of actin filament nucleation and branching activity of the Arp2/3 complex. May mediate inhibitory effects of free fatty acids on insulin signaling by phosphorylating IRS1, which in turn blocks IRS1 tyrosine phosphorylation and downstream activation of the PI3K/AKT pathway. Phosphorylates MSN (moesin) in the presence of phosphatidylglycerol or phosphatidylinositol. Phosphorylates PDPK1 at 'Ser-504' and 'Ser-532' and negatively regulates its ability to phosphorylate PKB/AKT1. Phosphorylates CCDC88A/GIV and inhibits its guanine nucleotide exchange factor activity. Phosphorylates and activates LRRK1, which phosphorylates RAB proteins involved in intracellular trafficking. This is Protein kinase C theta type (Prkcq) from Mus musculus (Mouse).